The primary structure comprises 156 residues: dCTP deaminase (156 aa).

Residues 79 to 84 (RSSLAR), D95, Q124, and Y138 each bind dCTP.

The protein belongs to the dCTP deaminase family. As to quaternary structure, homotrimer.

The enzyme catalyses dCTP + H2O + H(+) = dUTP + NH4(+). It participates in pyrimidine metabolism; dUMP biosynthesis; dUMP from dCTP (dUTP route): step 1/2. In terms of biological role, catalyzes the deamination of dCTP to dUTP. The chain is dCTP deaminase from Pyrococcus furiosus (strain ATCC 43587 / DSM 3638 / JCM 8422 / Vc1).